The primary structure comprises 656 residues: NADH-ubiquinone oxidoreductase chain 5 (656 aa).

17 helical membrane-spanning segments follow: residues 4-21 (TLIILPLLGSIVSGFFGR), 28-50 (AHLITCVSVITTTFLAILAFFEV), 81-103 (LTVSMFITVLIVSSLVHIYSISY), 112-129 (RFFSYLSLFTFMMIILVT), 133-155 (YLIMFVGWEGVGVCSYLLVNFWF), 176-198 (TLLTVGMFAILWSFGNIDYSTVF), 208-230 (IITIIGICLLIGATAKSSQVGLH), 243-262 (VSALIHAATMVTAGVYLLMR), 272-294 (TVLVLCLWLGAITTVFSSLIGLF), 301-319 (VIAYSTMSQLGMMVIAVGL), 329-351 (LVNHAFYKALLFLGAGSVIHAVA), 364-386 (EFLPLTYSVMLIASLSLVAVPFM), 409-431 (IVYFVATIGAMFTTLYSAKVLYL), 452-471 (LFMTIPLIILAIFSIFFGYL), 514-536 (FVFTVSLSLLSVLLSEFLPKLLI), 603-625 (SLGNLSTGIVTTYALYILIGLIF), and 629-651 (LLYFSYNDNNLLILIIFTLFALL).

This sequence belongs to the complex I subunit 5 family.

Its subcellular location is the mitochondrion inner membrane. The catalysed reaction is a ubiquinone + NADH + 5 H(+)(in) = a ubiquinol + NAD(+) + 4 H(+)(out). Functionally, core subunit of the mitochondrial membrane respiratory chain NADH dehydrogenase (Complex I) that is believed to belong to the minimal assembly required for catalysis. Complex I functions in the transfer of electrons from NADH to the respiratory chain. The immediate electron acceptor for the enzyme is believed to be ubiquinone. In Aspergillus niger, this protein is NADH-ubiquinone oxidoreductase chain 5 (nad5).